The sequence spans 106 residues: UPF0060 membrane protein Mrad2831_0929 (106 aa).

4 helical membrane-spanning segments follow: residues 3 to 23 (LLAYAAAALAEIAGCFAFWAW), 30 to 50 (AWWTLPGLASLAAFAALLTLV), 59 to 79 (FAAYGGVYVAASVLWLWLAEG), and 87 to 104 (LAGSAVCLAGTALILLGR).

The protein belongs to the UPF0060 family.

The protein resides in the cell inner membrane. This chain is UPF0060 membrane protein Mrad2831_0929, found in Methylobacterium radiotolerans (strain ATCC 27329 / DSM 1819 / JCM 2831 / NBRC 15690 / NCIMB 10815 / 0-1).